Reading from the N-terminus, the 512-residue chain is Hyaluronidase PH-20 (512 aa).

The signal sequence occupies residues 1 to 35 (MGELQFKWLFWRSFAESGGTFQTVLIFLFIPYSLT). Cystine bridges form between Cys60-Cys351 and Cys223-Cys237. The N-linked (GlcNAc...) asparagine glycan is linked to Asn63. The active-site Proton donor is the Glu147. Asn165 and Asn179 each carry an N-linked (GlcNAc...) asparagine glycan. N-linked (GlcNAc...) asparagine glycosylation occurs at Asn368. 3 disulfides stabilise this stretch: Cys376–Cys387, Cys381–Cys435, and Cys437–Cys464. N-linked (GlcNAc...) asparagine glycosylation occurs at Asn408.

Belongs to the glycosyl hydrolase 56 family.

The protein resides in the cell membrane. It carries out the reaction Random hydrolysis of (1-&gt;4)-linkages between N-acetyl-beta-D-glucosamine and D-glucuronate residues in hyaluronate.. Its function is as follows. Involved in sperm-egg adhesion. Upon fertilization sperm must first penetrate a layer of cumulus cells that surrounds the egg before reaching the zona pellucida. The cumulus cells are embedded in a matrix containing hyaluronic acid which is formed prior to ovulation. This protein aids in penetrating the layer of cumulus cells by digesting hyaluronic acid. The sequence is that of Hyaluronidase PH-20 (Spam1) from Rattus norvegicus (Rat).